The primary structure comprises 474 residues: Synaptotagmin-17 (474 aa).

The interval 54 to 112 (PAQTPPWLVSNRSEDKEGDSDNTTSEPPATPQDTSPDRRRSSSDTSRSTYSLTRRISSL) is disordered. The segment covering 96–112 (SDTSRSTYSLTRRISSL) has biased composition (low complexity). 2 consecutive C2 domains span residues 184-310 (QLGM…HWWK) and 321-455 (ELGE…EQWH).

Belongs to the synaptotagmin family.

It is found in the membrane. May play a role in dendrite formation by melanocytes. This Xenopus tropicalis (Western clawed frog) protein is Synaptotagmin-17 (syt17).